A 233-amino-acid chain; its full sequence is Orotidine 5'-phosphate decarboxylase (233 aa).

Substrate contacts are provided by residues aspartate 11, lysine 34, 61–70 (DLKLHDIPNT), threonine 117, arginine 179, glutamine 188, glycine 208, and arginine 209. Lysine 63 serves as the catalytic Proton donor.

Belongs to the OMP decarboxylase family. Type 1 subfamily. Homodimer.

The enzyme catalyses orotidine 5'-phosphate + H(+) = UMP + CO2. Its pathway is pyrimidine metabolism; UMP biosynthesis via de novo pathway; UMP from orotate: step 2/2. In terms of biological role, catalyzes the decarboxylation of orotidine 5'-monophosphate (OMP) to uridine 5'-monophosphate (UMP). The chain is Orotidine 5'-phosphate decarboxylase from Streptococcus pneumoniae (strain CGSP14).